The primary structure comprises 226 residues: Protein-L-isoaspartate O-methyltransferase (226 aa).

The active site involves Ser-75.

The protein belongs to the methyltransferase superfamily. L-isoaspartyl/D-aspartyl protein methyltransferase family.

The protein localises to the cytoplasm. The catalysed reaction is [protein]-L-isoaspartate + S-adenosyl-L-methionine = [protein]-L-isoaspartate alpha-methyl ester + S-adenosyl-L-homocysteine. Its function is as follows. Catalyzes the methyl esterification of L-isoaspartyl residues in peptides and proteins that result from spontaneous decomposition of normal L-aspartyl and L-asparaginyl residues. It plays a role in the repair and/or degradation of damaged proteins. The protein is Protein-L-isoaspartate O-methyltransferase of Lawsonia intracellularis (strain PHE/MN1-00).